Here is a 738-residue protein sequence, read N- to C-terminus: Squalene hopane cyclase afumA (738 aa).

PFTB repeat units follow at residues 132–173 (GSQY…RIIG) and 321–361 (RRRC…KLHD). The Proton donor role is filled by aspartate 460. PFTB repeat units follow at residues 482 to 523 (VRDA…ESLC), 581 to 621 (CARA…QYFK), and 634 to 675 (AARA…SQTA).

It belongs to the terpene cyclase/mutase family.

Its pathway is secondary metabolite biosynthesis. Squalene hopane cyclase; part of the gene cluster that mediates the biosynthesis fumihopaside A, a hopane-type glucoside that enhances the thermotolerance and UV resistance of N.fumigata. The first step of fumihopaside A biosynthesis is performed by the squalene hopane cyclase afumA that catalyzes the cyclization of 3S-oxidosqualene into the hopene 21-beta-H-hopane-3-beta,22-diol. The cytochrome P450 monooxygenase afumB is responsible for both hydroxylation at C-24 and oxidations at C-30 of the afumA product. The glycosyltransferase afumC then catalyzes the glycosylation at C-24, using UDP-D-glucose as a donor, to produce fumihopaside A. AfumC is also able to accept UDP-D-galactose and UDP-D-glucuronic acid as donors to yield minor derivatives. Fumihopaside B, another minor derivative produced, is different from fumihopaside A due to the presence of a double bond between C-22 and C-29. This is Squalene hopane cyclase afumA from Aspergillus fumigatus (strain CBS 144.89 / FGSC A1163 / CEA10) (Neosartorya fumigata).